We begin with the raw amino-acid sequence, 464 residues long: uncharacterized protein (464 aa).

Transmembrane regions (helical) follow at residues 7–27 (VLNV…LRTL), 37–57 (LVFY…LVAA), 94–114 (VVWY…LIAP), 121–141 (FYLL…NCFG), 153–173 (ASIG…VWIF), 196–216 (LSLF…AVHA), 231–251 (FYSA…IVIV), 282–302 (VIAV…IIGP), 329–349 (VAIL…FILL), 359–379 (LSDL…AAAI), 401–421 (MSLI…VGFI), and 432–452 (FLFE…PWLF).

The protein belongs to the amino acid-polyamine-organocation (APC) superfamily.

Its subcellular location is the cell membrane. This is an uncharacterized protein from Legionella pneumophila subsp. pneumophila (strain Philadelphia 1 / ATCC 33152 / DSM 7513).